A 70-amino-acid polypeptide reads, in one-letter code: Large ribosomal subunit protein bL31 (70 aa).

The residue at position 8 (Lys8) is an N6-acetyllysine. Residues Cys16, Cys18, Cys37, and Cys40 each contribute to the Zn(2+) site.

The protein belongs to the bacterial ribosomal protein bL31 family. Type A subfamily. In terms of assembly, part of the 50S ribosomal subunit. The cofactor is Zn(2+).

Its function is as follows. Binds the 23S rRNA. The polypeptide is Large ribosomal subunit protein bL31 (Shigella flexneri).